A 96-amino-acid chain; its full sequence is Large ribosomal subunit protein bL25 (96 aa).

The protein belongs to the bacterial ribosomal protein bL25 family. Part of the 50S ribosomal subunit; part of the 5S rRNA/L5/L18/L25 subcomplex. Contacts the 5S rRNA. Binds to the 5S rRNA independently of L5 and L18.

In terms of biological role, this is one of the proteins that binds to the 5S RNA in the ribosome where it forms part of the central protuberance. The sequence is that of Large ribosomal subunit protein bL25 from Buchnera aphidicola subsp. Schizaphis graminum (strain Sg).